We begin with the raw amino-acid sequence, 410 residues long: Protein king tubby 2 (410 aa).

Over residues 48–72 (SPNNPDQILTSTGNASITTTPTSPY) the composition is skewed to polar residues. Disordered regions lie at residues 48 to 109 (SPNN…STRH) and 121 to 159 (ISPA…EGDV). The segment covering 132–143 (SHHDSSSGKSVE) has biased composition (basic and acidic residues).

This sequence belongs to the TUB family.

It localises to the cytoplasm. The protein resides in the nucleus. In Aedes aegypti (Yellowfever mosquito), this protein is Protein king tubby 2 (king-tubby2).